Consider the following 330-residue polypeptide: PTS system mannose-specific EIIAB component (330 aa).

The PTS EIIA type-4 domain occupies 2-130 (GIGIIIASHG…NIIKESKDGI (129 aa)). Histidine 10 serves as the catalytic Tele-phosphohistidine intermediate; for EIIA activity. The residue at position 10 (histidine 10) is a Phosphohistidine; by HPr. The interval 143–161 (TAATEKVVNALQGAIPAGT) is hinge. Positions 166–330 (GKLKINLARV…FELIQKANIK (165 aa)) constitute a PTS EIIB type-4 domain. Histidine 181 functions as the Pros-phosphohistidine intermediate; for EIIB activity in the catalytic mechanism. Phosphohistidine; by EIIA is present on histidine 181.

Homodimer.

It localises to the cytoplasm. The protein localises to the cell membrane. It carries out the reaction D-mannose(out) + N(pros)-phospho-L-histidyl-[protein] = D-mannose 6-phosphate(in) + L-histidyl-[protein]. In terms of biological role, the phosphoenolpyruvate-dependent sugar phosphotransferase system (sugar PTS), a major carbohydrate active transport system, catalyzes the phosphorylation of incoming sugar substrates concomitantly with their translocation across the cell membrane. The enzyme II ManXYZ PTS system is involved in mannose transport. This is PTS system mannose-specific EIIAB component from Streptococcus pyogenes serotype M6 (strain ATCC BAA-946 / MGAS10394).